Consider the following 356-residue polypeptide: Protein RecA (356 aa).

Residue 68-75 participates in ATP binding; sequence GPESSGKT.

Belongs to the RecA family.

It is found in the cytoplasm. Functionally, can catalyze the hydrolysis of ATP in the presence of single-stranded DNA, the ATP-dependent uptake of single-stranded DNA by duplex DNA, and the ATP-dependent hybridization of homologous single-stranded DNAs. It interacts with LexA causing its activation and leading to its autocatalytic cleavage. The sequence is that of Protein RecA from Clostridium botulinum (strain Eklund 17B / Type B).